An 878-amino-acid chain; its full sequence is uncharacterized protein (878 aa).

Disordered stretches follow at residues 58-223, 306-494, 585-652, and 679-709; these read IGVD…RTKF, KGRL…TSSR, KLLE…SGKL, and PSSM…GGGG. Composition is skewed to low complexity over residues 64-213, 314-325, and 335-355; these read NGNS…SGTS, SNSSQSSDSDYS, and IPNS…PNSN. Positions 362-372 are enriched in polar residues; it reads RNPNQLSSTNV. A compositionally biased stretch (low complexity) spans 373–494; the sequence is NNNINNSGGS…TPTTPVTSSR (122 aa). Basic and acidic residues predominate over residues 585-595; that stretch reads KLLEQQKEQQQ. Positions 596–605 are enriched in low complexity; the sequence is KEQQQQQKQQ. Residues 615 to 624 are compositionally biased toward acidic residues; the sequence is TDDEDEDDDE. 2 stretches are compositionally biased toward low complexity: residues 639–652 and 679–704; these read NLSN…SGKL and PSSM…SSSS.

This is an uncharacterized protein from Dictyostelium discoideum (Social amoeba).